The primary structure comprises 562 residues: NAD-dependent malic enzyme (562 aa).

Residue Y101 is the Proton donor of the active site. R154 lines the NAD(+) pocket. K172 serves as the catalytic Proton acceptor. A divalent metal cation-binding residues include E243, D244, and D267. Residues D267 and N415 each contribute to the NAD(+) site.

It belongs to the malic enzymes family. As to quaternary structure, homotetramer. Requires Mg(2+) as cofactor. Mn(2+) is required as a cofactor.

The catalysed reaction is (S)-malate + NAD(+) = pyruvate + CO2 + NADH. The enzyme catalyses oxaloacetate + H(+) = pyruvate + CO2. The chain is NAD-dependent malic enzyme from Vibrio parahaemolyticus serotype O3:K6 (strain RIMD 2210633).